Consider the following 213-residue polypeptide: Phosphatidylethanolamine N-methyltransferase A (213 aa).

Over 1 to 21 the chain is Lumenal; sequence MIVEHAIDYIDYLMNYVDFTE. An intramembrane region (helical) is located at residues 22–42; it reads KYFLLTIACVVFNPTWWNITA. At 43 to 54 the chain is on the lumenal side; the sequence is RMEYKTKFMTKI. The chain crosses the membrane as a helical span at residues 55–75; it reads CGSKENGCYLLAFLIFSLGIL. Topologically, residues 76 to 102 are cytoplasmic; it reads RDWLFSEALIRQPIFQEFDRFEVEVLS. The chain crosses the membrane as a helical span at residues 103–123; that stretch reads YILYGFGGILVLAAYLKLGIT. 107 to 109 is an S-adenosyl-L-methionine binding site; it reads GFG. Topologically, residues 124 to 166 are lumenal; it reads GTYLGDYFGILMKERVTGFPFNVMNNPMYNGSVMLFIAHALSY. A helical membrane pass occupies residues 167 to 187; that stretch reads KSVAGLVLSFVVYVVYKFALI. At 188–213 the chain is on the cytoplasmic side; sequence FEESFTNYIYSTAAANAAKKNKSKSK. An S-adenosyl-L-methionine-binding site is contributed by 189–190; that stretch reads EE.

It belongs to the class VI-like SAM-binding methyltransferase superfamily. PEMT/PEM2 methyltransferase family.

The protein resides in the endoplasmic reticulum membrane. The protein localises to the mitochondrion membrane. The catalysed reaction is a 1,2-diacyl-sn-glycero-3-phospho-N-methylethanolamine + S-adenosyl-L-methionine = a 1,2-diacyl-sn-glycero-3-phospho-N,N-dimethylethanolamine + S-adenosyl-L-homocysteine + H(+). The enzyme catalyses a 1,2-diacyl-sn-glycero-3-phospho-N,N-dimethylethanolamine + S-adenosyl-L-methionine = a 1,2-diacyl-sn-glycero-3-phosphocholine + S-adenosyl-L-homocysteine + H(+). It carries out the reaction a 1,2-diacyl-sn-glycero-3-phosphoethanolamine + S-adenosyl-L-methionine = a 1,2-diacyl-sn-glycero-3-phospho-N-methylethanolamine + S-adenosyl-L-homocysteine + H(+). It functions in the pathway phospholipid metabolism; phosphatidylcholine biosynthesis. Its function is as follows. Catalyzes the three sequential steps of the methylation pathway of phosphatidylcholine biosynthesis, the SAM-dependent methylation of phosphatidylethanolamine (PE) to phosphatidylmonomethylethanolamine (PMME), PMME to phosphatidyldimethylethanolamine (PDME), and PDME to phosphatidylcholine (PC). The sequence is that of Phosphatidylethanolamine N-methyltransferase A (pemtA) from Dictyostelium discoideum (Social amoeba).